A 355-amino-acid chain; its full sequence is UDP-N-acetylglucosamine--N-acetylmuramyl-(pentapeptide) pyrophosphoryl-undecaprenol N-acetylglucosamine transferase (355 aa).

Residues 15–17 (TGG), Asn-127, Arg-163, Ser-191, Ile-244, 263–268 (ALTVSE), and Gln-288 each bind UDP-N-acetyl-alpha-D-glucosamine.

It belongs to the glycosyltransferase 28 family. MurG subfamily.

It localises to the cell inner membrane. It carries out the reaction di-trans,octa-cis-undecaprenyl diphospho-N-acetyl-alpha-D-muramoyl-L-alanyl-D-glutamyl-meso-2,6-diaminopimeloyl-D-alanyl-D-alanine + UDP-N-acetyl-alpha-D-glucosamine = di-trans,octa-cis-undecaprenyl diphospho-[N-acetyl-alpha-D-glucosaminyl-(1-&gt;4)]-N-acetyl-alpha-D-muramoyl-L-alanyl-D-glutamyl-meso-2,6-diaminopimeloyl-D-alanyl-D-alanine + UDP + H(+). It functions in the pathway cell wall biogenesis; peptidoglycan biosynthesis. Cell wall formation. Catalyzes the transfer of a GlcNAc subunit on undecaprenyl-pyrophosphoryl-MurNAc-pentapeptide (lipid intermediate I) to form undecaprenyl-pyrophosphoryl-MurNAc-(pentapeptide)GlcNAc (lipid intermediate II). The chain is UDP-N-acetylglucosamine--N-acetylmuramyl-(pentapeptide) pyrophosphoryl-undecaprenol N-acetylglucosamine transferase from Salmonella paratyphi A (strain ATCC 9150 / SARB42).